Here is a 156-residue protein sequence, read N- to C-terminus: Putative pre-16S rRNA nuclease (156 aa).

It belongs to the YqgF nuclease family.

It is found in the cytoplasm. In terms of biological role, could be a nuclease involved in processing of the 5'-end of pre-16S rRNA. This Caulobacter vibrioides (strain ATCC 19089 / CIP 103742 / CB 15) (Caulobacter crescentus) protein is Putative pre-16S rRNA nuclease.